Reading from the N-terminus, the 840-residue chain is Probable alpha-glucuronidase A (840 aa).

An N-terminal signal peptide occupies residues 1–19; it reads MWSGIPVFALLSSIGIAAA. N-linked (GlcNAc...) asparagine glycans are attached at residues N50, N149, N222, N262, N279, N310, N465, N527, N576, N610, N682, N723, and N732.

It belongs to the glycosyl hydrolase 67 family.

The protein localises to the secreted. It catalyses the reaction an alpha-D-glucuronoside + H2O = D-glucuronate + an alcohol. Alpha-glucuronidase involved in the hydrolysis of xylan, a major structural heterogeneous polysaccharide found in plant biomass representing the second most abundant polysaccharide in the biosphere, after cellulose. Releases 4-O-methylglucuronic acid from xylan. The protein is Probable alpha-glucuronidase A (aguA) of Neosartorya fischeri (strain ATCC 1020 / DSM 3700 / CBS 544.65 / FGSC A1164 / JCM 1740 / NRRL 181 / WB 181) (Aspergillus fischerianus).